The chain runs to 2545 residues: Methylphloroacetophenone synthase (2545 aa).

The segment at 8 to 261 is N-terminal acylcarrier protein transacylase (SAT) domain; that stretch reads AFGALAPWPA…HVAIHEGIPQ (254 aa). The Ketosynthase family 3 (KS3) domain maps to 383-798; that stretch reads KDAIAIIGMG…GSNAAMIVLE (416 aa). Catalysis depends on for beta-ketoacyl synthase activity residues Cys547, His682, and His721. The tract at residues 914-1218 is malonyl-CoA:ACP transacylase (MAT) domain; it reads LCFGGQVSDR…VSLQLNKPNS (305 aa). Ser1001 (for acyl/malonyl transferase activity) is an active-site residue. The tract at residues 1293 to 1423 is N-terminal hotdog fold; the sequence is LPAVLIRLKS…GTVNLKVADD (131 aa). The 313-residue stretch at 1293-1605 folds into the PKS/mFAS DH domain; it reads LPAVLIRLKS…FTDIRRPVPI (313 aa). The tract at residues 1296-1604 is product template (PT) domain; sequence VLIRLKSFDS…NFTDIRRPVP (309 aa). The interval 1449–1605 is C-terminal hotdog fold; the sequence is RSESLRGNVL…FTDIRRPVPI (157 aa). Residues 1657–1731 enclose the Carrier domain; sequence TSIYEDICGL…SLVDYLHGKG (75 aa). Ser1691 carries the post-translational modification O-(pantetheine 4'-phosphoryl)serine. Residues 1748-1768 are compositionally biased toward low complexity; that stretch reads SSSHAISTGASSPPDSSGASA. The segment at 1748–1773 is disordered; the sequence is SSSHAISTGASSPPDSSGASAMTTPP. The segment at 1931 to 2163 is methyltransferase (CMeT) domain; sequence FGASETKLLN…GFKHVSWTDG (233 aa). Residues 2198–2544 form a claisen cyclase (CLC) domain region; that stretch reads AGVPMEEVVW…YDFICRQLGM (347 aa). Active-site for thioesterase activity residues include Ser2321, Asp2481, and His2513.

Its function is as follows. Methylphloroacetophenone synthase; part of the gene cluster that mediates the biosynthesis of usnic acid, a dibenzofuran lichen product possessing a broad spectrum of biological activities. Two genes, mpas and mpao, comprise the usnic acid biosynthetic gene cluster with a single post-PKS enzyme, the methylphloracetophenone oxidase (mpao). The methylphloroacetophenone synthase (mpas) is a non-reducing polyketide synthase that produces methylphloracetophenone from acetate via a methylated tetraketide intermediate. The methylphloroacetophenone oxidase then carries out the oxidative dimerization of methylphloracetophenone to usnic acid. The protein is Methylphloroacetophenone synthase of Cladonia uncialis (Cup lichen).